A 208-amino-acid chain; its full sequence is Heart- and neural crest derivatives-expressed protein 2 (208 aa).

2 disordered regions span residues alanine 79–isoleucine 106 and glutamate 161–tryptophan 197. Basic residues predominate over residues threonine 88–threonine 103. The bHLH domain maps to lysine 90–leucine 142. The segment covering glutamate 161 to aspartate 178 has biased composition (basic and acidic residues).

As to quaternary structure, efficient DNA binding requires dimerization with another bHLH protein.

The protein localises to the nucleus. Functionally, essential for myocardial and pectoral fin differentiation, patterning and morphogenesis. The protein is Heart- and neural crest derivatives-expressed protein 2 (hand2) of Danio rerio (Zebrafish).